Here is a 227-residue protein sequence, read N- to C-terminus: Ribose-5-phosphate isomerase A (227 aa).

Substrate contacts are provided by residues 26 to 29 (TGST), 82 to 85 (DGAD), and 95 to 98 (KGGG). Glu104 (proton acceptor) is an active-site residue. Lys122 contributes to the substrate binding site.

It belongs to the ribose 5-phosphate isomerase family. In terms of assembly, homodimer.

It catalyses the reaction aldehydo-D-ribose 5-phosphate = D-ribulose 5-phosphate. It functions in the pathway carbohydrate degradation; pentose phosphate pathway; D-ribose 5-phosphate from D-ribulose 5-phosphate (non-oxidative stage): step 1/1. Catalyzes the reversible conversion of ribose-5-phosphate to ribulose 5-phosphate. In Streptococcus equi subsp. equi (strain 4047), this protein is Ribose-5-phosphate isomerase A.